The chain runs to 365 residues: Histidinol-phosphate aminotransferase 2 (365 aa).

At lysine 222 the chain carries N6-(pyridoxal phosphate)lysine.

The protein belongs to the class-II pyridoxal-phosphate-dependent aminotransferase family. Histidinol-phosphate aminotransferase subfamily. Homodimer. Requires pyridoxal 5'-phosphate as cofactor.

The catalysed reaction is L-histidinol phosphate + 2-oxoglutarate = 3-(imidazol-4-yl)-2-oxopropyl phosphate + L-glutamate. Its pathway is amino-acid biosynthesis; L-histidine biosynthesis; L-histidine from 5-phospho-alpha-D-ribose 1-diphosphate: step 7/9. The chain is Histidinol-phosphate aminotransferase 2 (hisC2) from Bordetella parapertussis (strain 12822 / ATCC BAA-587 / NCTC 13253).